A 380-amino-acid polypeptide reads, in one-letter code: Cytochrome b (380 aa).

4 helical membrane passes run F34–M54, W78–I99, W114–L134, and F179–L199. Heme b-binding residues include H84 and H98. Heme b is bound by residues H183 and H197. H202 contacts a ubiquinone. Helical transmembrane passes span Y227–A247, L289–H309, I321–G341, and F348–P368.

It belongs to the cytochrome b family. In terms of assembly, the cytochrome bc1 complex contains 3 respiratory subunits (MT-CYB, CYC1 and UQCRFS1), 2 core proteins (UQCRC1 and UQCRC2) and probably 6 low-molecular weight proteins. Requires heme b as cofactor.

Its subcellular location is the mitochondrion inner membrane. In terms of biological role, component of the ubiquinol-cytochrome c reductase complex (complex III or cytochrome b-c1 complex) that is part of the mitochondrial respiratory chain. The b-c1 complex mediates electron transfer from ubiquinol to cytochrome c. Contributes to the generation of a proton gradient across the mitochondrial membrane that is then used for ATP synthesis. This chain is Cytochrome b (mt-cyb), found in Pelophylax nigromaculatus (Black-spotted frog).